We begin with the raw amino-acid sequence, 276 residues long: NH(3)-dependent NAD(+) synthetase (276 aa).

Residue 43-50 (GISGGVDS) participates in ATP binding. Asp49 lines the Mg(2+) pocket. Position 146 (Arg146) interacts with deamido-NAD(+). Thr166 lines the ATP pocket. Position 171 (Glu171) interacts with Mg(2+). 2 residues coordinate deamido-NAD(+): Lys179 and Asp186. Positions 195 and 217 each coordinate ATP. 266 to 267 (HK) serves as a coordination point for deamido-NAD(+).

This sequence belongs to the NAD synthetase family. In terms of assembly, homodimer.

It catalyses the reaction deamido-NAD(+) + NH4(+) + ATP = AMP + diphosphate + NAD(+) + H(+). It functions in the pathway cofactor biosynthesis; NAD(+) biosynthesis; NAD(+) from deamido-NAD(+) (ammonia route): step 1/1. Its function is as follows. Catalyzes the ATP-dependent amidation of deamido-NAD to form NAD. Uses ammonia as a nitrogen source. The sequence is that of NH(3)-dependent NAD(+) synthetase from Shewanella halifaxensis (strain HAW-EB4).